Reading from the N-terminus, the 216-residue chain is Orotate phosphoribosyltransferase (216 aa).

Lys30 contacts 5-phospho-alpha-D-ribose 1-diphosphate. Orotate is bound at residue Phe38–Phe39. Residues Tyr75–Lys76, Arg102, Lys103, Lys106, His108, and Asp128–Ala136 each bind 5-phospho-alpha-D-ribose 1-diphosphate. Orotate-binding residues include Thr132 and Arg160.

Belongs to the purine/pyrimidine phosphoribosyltransferase family. PyrE subfamily. In terms of assembly, homodimer. It depends on Mg(2+) as a cofactor.

It catalyses the reaction orotidine 5'-phosphate + diphosphate = orotate + 5-phospho-alpha-D-ribose 1-diphosphate. The protein operates within pyrimidine metabolism; UMP biosynthesis via de novo pathway; UMP from orotate: step 1/2. In terms of biological role, catalyzes the transfer of a ribosyl phosphate group from 5-phosphoribose 1-diphosphate to orotate, leading to the formation of orotidine monophosphate (OMP). The polypeptide is Orotate phosphoribosyltransferase (Acinetobacter baumannii (strain ATCC 17978 / DSM 105126 / CIP 53.77 / LMG 1025 / NCDC KC755 / 5377)).